Reading from the N-terminus, the 1371-residue chain is Perilipin-4 (1371 aa).

Residues 1 to 13 (MSAPDEGRRDPPK) show a composition bias toward basic and acidic residues. Positions 1–22 (MSAPDEGRRDPPKPKGKTLGSF) are disordered. Residues S25 and S31 each carry the phosphoserine modification. Residues 37–86 (ANAHSSARARPAADPTGAPAAEAAQPQAQVAAHPEQTAPWTEKELQPSEK) are disordered. Residues 44-72 (RARPAADPTGAPAAEAAQPQAQVAAHPEQ) show a composition bias toward low complexity. 27 consecutive repeat copies span residues 109-141 (GVAS…VVSS), 142-174 (GVTG…TVST), 175-207 (GLTG…TVTT), 208-240 (GVMG…AVST), 241-273 (GLTG…TVCS), 274-306 (GVTG…TVCS), 307-339 (GVTG…TVCS), 340-372 (GVTG…TVCS), 373-405 (GVTG…TMST), 406-438 (GLTG…TVCS), 439-471 (GVTG…TVCS), 472-504 (GVTG…AVST), 505-537 (GLTG…TVCS), 538-570 (GVTS…TMST), 571-603 (GLTG…TVTT), 604-636 (GLVG…TIYS), 637-669 (GVTS…TFGS), 670-702 (GVTS…TVTT), 703-735 (GLMG…TVCS), 736-768 (GVTG…AVST), 769-801 (GLTG…AVCS), 802-834 (GVTG…TVCS), 835-867 (GVTG…TLGS), 868-900 (GVTG…AVST), 901-933 (GLTG…TVCS), 934-966 (GVTG…AVTT), and 967-999 (GVTG…TVFS). Residues 109 to 999 (GVASVVDVAK…LMGTKDTVFS (891 aa)) are 27 X 33 AA approximate tandem repeat. Over residues 1060–1083 (PATSWGGLTSSRTTDNGGEQTALS) the composition is skewed to polar residues. Disordered regions lie at residues 1060-1093 (PATS…SGIS) and 1240-1260 (QAPE…EDAA).

This sequence belongs to the perilipin family.

Its subcellular location is the cell membrane. The protein resides in the cytoplasm. The protein localises to the lipid droplet. May play a role in triacylglycerol packaging into adipocytes. May function as a coat protein involved in the biogenesis of lipid droplets. This is Perilipin-4 from Homo sapiens (Human).